The chain runs to 304 residues: Glyceraldehyde-3-phosphate dehydrogenase 2 (304 aa).

NAD(+)-binding positions include 1–2 (RI), Asp22, and Arg67. D-glyceraldehyde 3-phosphate is bound by residues 138–140 (SCT), Thr169, 198–199 (TG), and Arg221. Cys139 acts as the Nucleophile in catalysis. Asn303 contributes to the NAD(+) binding site.

This sequence belongs to the glyceraldehyde-3-phosphate dehydrogenase family. In terms of assembly, homotetramer.

The protein resides in the cytoplasm. It catalyses the reaction D-glyceraldehyde 3-phosphate + phosphate + NAD(+) = (2R)-3-phospho-glyceroyl phosphate + NADH + H(+). It functions in the pathway carbohydrate degradation; glycolysis; pyruvate from D-glyceraldehyde 3-phosphate: step 1/5. The chain is Glyceraldehyde-3-phosphate dehydrogenase 2 (Gapdh2) from Drosophila subobscura (Fruit fly).